Reading from the N-terminus, the 320-residue chain is Uridine phosphorylase 2 (320 aa).

Phosphate is bound by residues glycine 66, arginine 100, and 144 to 147 (RIGT). Cysteine 95 and cysteine 102 are disulfide-bonded. Uridine is bound by residues 148–149 (SG) and 223–225 (QGR).

This sequence belongs to the PNP/UDP phosphorylase family. In terms of assembly, homodimer. As to expression, liver specific.

It catalyses the reaction uridine + phosphate = alpha-D-ribose 1-phosphate + uracil. The enzyme catalyses 2'-deoxyuridine + phosphate = 2-deoxy-alpha-D-ribose 1-phosphate + uracil. It functions in the pathway pyrimidine metabolism; UMP biosynthesis via salvage pathway; uracil from uridine (phosphorylase route): step 1/1. With respect to regulation, a conditional disulfide bridge can form within the protein that dislocates a critical phosphate-coordinating arginine Arg-100 away from the active site, disabling the enzyme. Functionally, catalyzes the reversible phosphorylytic cleavage of uridine to uracil and ribose-1-phosphate which can then be utilized as carbon and energy sources or in the rescue of pyrimidine bases for nucleotide synthesis. Shows broad substrate specificity and can also accept deoxyuridine and other analogous compounds. This is Uridine phosphorylase 2 from Mus musculus (Mouse).